Consider the following 514-residue polypeptide: Histidine ammonia-lyase (514 aa).

The 5-imidazolinone (Cys-Gly) cross-link spans 143 to 145 (CSG). 2,3-didehydroalanine (Ser) is present on S144.

Belongs to the PAL/histidase family. Post-translationally, contains an active site 4-methylidene-imidazol-5-one (MIO), which is formed autocatalytically by cyclization and dehydration of residues Cys-Ser-Gly.

It localises to the cytoplasm. The catalysed reaction is L-histidine = trans-urocanate + NH4(+). It participates in amino-acid degradation; L-histidine degradation into L-glutamate; N-formimidoyl-L-glutamate from L-histidine: step 1/3. This Streptomyces griseus protein is Histidine ammonia-lyase (hutH).